The chain runs to 394 residues: Aspergillopepsin-1 (394 aa).

Residues 1–20 (MVVFSKVTAAVFGLATIASA) form the signal peptide. A propeptide spans 21-69 (APAPPTRKGFTVQQQARPAQKKQVNLPAMYAHALTKFGGSVPESVKVAA) (activation peptide). One can recognise a Peptidase A1 domain in the interval 85-391 (YLTPVNVGGT…DSEGPRLGFA (307 aa)). Active-site residues include Asp101 and Asp283. The cysteines at positions 319 and 354 are disulfide-linked.

Belongs to the peptidase A1 family. Monomer.

It is found in the secreted. It carries out the reaction Hydrolysis of proteins with broad specificity. Generally favors hydrophobic residues in P1 and P1', but also accepts Lys in P1, which leads to activation of trypsinogen. Does not clot milk.. Secreted aspartic endopeptidase that allows assimilation of proteinaceous substrates. The scissile peptide bond is attacked by a nucleophilic water molecule activated by two aspartic residues in the active site. Shows a broad primary substrate specificity. Favors hydrophobic residues at the P1 and P1' positions, but also accepts a lysine residue in the P1 position, leading to the activation of trypsinogen and chymotrypsinogen A. In Aspergillus clavatus (strain ATCC 1007 / CBS 513.65 / DSM 816 / NCTC 3887 / NRRL 1 / QM 1276 / 107), this protein is Aspergillopepsin-1 (pepA).